We begin with the raw amino-acid sequence, 297 residues long: Homoserine kinase (297 aa).

82–92 is a binding site for ATP; sequence PLTRGLGSSAS.

Belongs to the GHMP kinase family. Homoserine kinase subfamily.

It is found in the cytoplasm. It catalyses the reaction L-homoserine + ATP = O-phospho-L-homoserine + ADP + H(+). Its pathway is amino-acid biosynthesis; L-threonine biosynthesis; L-threonine from L-aspartate: step 4/5. Catalyzes the ATP-dependent phosphorylation of L-homoserine to L-homoserine phosphate. The sequence is that of Homoserine kinase from Bacillus cereus (strain ZK / E33L).